The chain runs to 501 residues: Protein anon-37Cs (501 aa).

It localises to the cytoplasm. In terms of biological role, has a non-vital function. The sequence is that of Protein anon-37Cs (anon-37Cs) from Drosophila simulans (Fruit fly).